The following is a 361-amino-acid chain: Isocitrate dehydrogenase [NAD] subunit 1, mitochondrial (361 aa).

A mitochondrion-targeting transit peptide spans 1–12; sequence MLRQGIAAQKKS. Positions 110, 141, and 229 each coordinate substrate. Residue Asp229 coordinates Mg(2+).

The protein belongs to the isocitrate and isopropylmalate dehydrogenases family. Octamer of two non-identical subunits IDH1 and IDH2. The cofactor is Mg(2+). Mn(2+) is required as a cofactor.

The protein localises to the mitochondrion. The catalysed reaction is D-threo-isocitrate + NAD(+) = 2-oxoglutarate + CO2 + NADH. Its function is as follows. Performs an essential role in the oxidative function of the citric acid cycle. The sequence is that of Isocitrate dehydrogenase [NAD] subunit 1, mitochondrial (IDH1) from Kluyveromyces lactis (strain ATCC 8585 / CBS 2359 / DSM 70799 / NBRC 1267 / NRRL Y-1140 / WM37) (Yeast).